The chain runs to 276 residues: MRSELSVTSSIFEANRARGAVRFDVHARDGVTRRGVLHESGSLRVRFPSPEDEGLSGVFVNTAGGVAGGDRFDVEISAADAARLTLTTAAAEKVYRAPGPAAELNIALKVGAGAHLSWLPQETILFDRARVHRRFDIALDEAASLLLCEIVVFGRTAMGERMEQGEFVDRWRLSRGGRLVFAETVRLGGDIGAKLARSAVAKGGAAIGTALIVPGDEALIERIREASESFAGEVGISAWNGFAMARFCAQDAARLRADMMAVLARTGAALPRLWLN.

Belongs to the UreD family. UreD, UreF and UreG form a complex that acts as a GTP-hydrolysis-dependent molecular chaperone, activating the urease apoprotein by helping to assemble the nickel containing metallocenter of UreC. The UreE protein probably delivers the nickel.

Its subcellular location is the cytoplasm. In terms of biological role, required for maturation of urease via the functional incorporation of the urease nickel metallocenter. This is Urease accessory protein UreD from Bradyrhizobium diazoefficiens (strain JCM 10833 / BCRC 13528 / IAM 13628 / NBRC 14792 / USDA 110).